The primary structure comprises 477 residues: Ankyrin repeat, SAM and basic leucine zipper domain-containing protein 1 (477 aa).

The disordered stretch occupies residues 1–24 (MAASSLWGPAVAGGGESSESEDDG). S17, S18, and S20 each carry phosphoserine. ANK repeat units follow at residues 45 to 74 (EKNE…SVDS), 78 to 107 (YGWT…NASF), 110 to 144 (DKQT…DPNV), 148 to 177 (RQMT…EVNA), 181 to 210 (NGYT…NKML), and 214 to 243 (DGKT…PLEG). The 63-residue stretch at 272 to 334 (SYTAFGELDL…KILSALKELM (63 aa)) folds into the SAM domain.

Interacts with DDX4, PIWIL1, RANBP9 and TDRD1.

The protein localises to the cytoplasm. Functionally, plays a central role during spermatogenesis by repressing transposable elements and preventing their mobilization, which is essential for the germline integrity. Acts via the piRNA metabolic process, which mediates the repression of transposable elements during meiosis by forming complexes composed of piRNAs and Piwi proteins and governs the methylation and subsequent repression of transposons. Its association with pi-bodies suggests a participation in the primary piRNAs metabolic process. Required prior to the pachytene stage to facilitate the production of multiple types of piRNAs, including those associated with repeats involved in the regulation of retrotransposons. May act by mediating protein-protein interactions during germ cell maturation. The sequence is that of Ankyrin repeat, SAM and basic leucine zipper domain-containing protein 1 (ASZ1) from Echinops telfairi (Lesser hedgehog tenrec).